A 542-amino-acid chain; its full sequence is Carbamoyl phosphate synthase large chain, C-terminal section (542 aa).

A carbamoyl phosphate synthetic domain region spans residues 1-389; the sequence is MSDKVLVIGA…WKAQLAAGHE (389 aa). Positions 122 to 316 constitute an ATP-grasp domain; it reads SKLLKKLGIP…LAKIGTKAIL (195 aa). ATP-binding residues include arginine 158, arginine 197, isoleucine 199, glutamate 204, glycine 230, valine 231, histidine 232, serine 233, glutamine 273, and glutamate 287. Mg(2+) contacts are provided by glutamine 273, glutamate 287, and asparagine 289. Residues glutamine 273, glutamate 287, and asparagine 289 each contribute to the Mn(2+) site. An MGS-like domain is found at 388–542; the sequence is HELPLEGTAV…KPEELTRYGG (155 aa). The allosteric domain stretch occupies residues 390–542; it reads LPLEGTAVIS…KPEELTRYGG (153 aa).

The protein belongs to the CarB family. Composed of two chains; the small (or glutamine) chain promotes the hydrolysis of glutamine to ammonia, which is used by the large (or ammonia) chain to synthesize carbamoyl phosphate. Tetramer of heterodimers (alpha,beta)4. Mg(2+) serves as cofactor. Requires Mn(2+) as cofactor.

The enzyme catalyses hydrogencarbonate + L-glutamine + 2 ATP + H2O = carbamoyl phosphate + L-glutamate + 2 ADP + phosphate + 2 H(+). The catalysed reaction is hydrogencarbonate + NH4(+) + 2 ATP = carbamoyl phosphate + 2 ADP + phosphate + 2 H(+). It participates in amino-acid biosynthesis; L-arginine biosynthesis; carbamoyl phosphate from bicarbonate: step 1/1. The protein operates within pyrimidine metabolism; UMP biosynthesis via de novo pathway; (S)-dihydroorotate from bicarbonate: step 1/3. Its function is as follows. Large subunit of the glutamine-dependent carbamoyl phosphate synthetase (CPSase). CPSase catalyzes the formation of carbamoyl phosphate from the ammonia moiety of glutamine, carbonate, and phosphate donated by ATP, constituting the first step of 2 biosynthetic pathways, one leading to arginine and/or urea and the other to pyrimidine nucleotides. The large subunit (synthetase) binds the substrates ammonia (free or transferred from glutamine from the small subunit), hydrogencarbonate and ATP and carries out an ATP-coupled ligase reaction, activating hydrogencarbonate by forming carboxy phosphate which reacts with ammonia to form carbamoyl phosphate. This Methanopyrus kandleri (strain AV19 / DSM 6324 / JCM 9639 / NBRC 100938) protein is Carbamoyl phosphate synthase large chain, C-terminal section (carB2).